A 711-amino-acid polypeptide reads, in one-letter code: Polyribonucleotide nucleotidyltransferase (711 aa).

Positions 486 and 492 each coordinate Mg(2+). A KH domain is found at 553-612 (PRIHTIKINPDKIKDVIGKGGSVIRALTEETGTTIEIEDDGTVKIAATDGEKAKHAIRRI). Positions 622–690 (GRIYNGKVTR…RQGRVRLSIK (69 aa)) constitute an S1 motif domain. The interval 690–711 (KEATEQSQPAAAPEAPAAEQGE) is disordered. The segment covering 694–711 (EQSQPAAAPEAPAAEQGE) has biased composition (low complexity).

Belongs to the polyribonucleotide nucleotidyltransferase family. As to quaternary structure, component of the RNA degradosome, which is a multiprotein complex involved in RNA processing and mRNA degradation. Requires Mg(2+) as cofactor.

The protein localises to the cytoplasm. The catalysed reaction is RNA(n+1) + phosphate = RNA(n) + a ribonucleoside 5'-diphosphate. Its function is as follows. Involved in mRNA degradation. Catalyzes the phosphorolysis of single-stranded polyribonucleotides processively in the 3'- to 5'-direction. The chain is Polyribonucleotide nucleotidyltransferase from Citrobacter koseri (strain ATCC BAA-895 / CDC 4225-83 / SGSC4696).